The primary structure comprises 204 residues: Glycerol-3-phosphate acyltransferase (204 aa).

5 consecutive transmembrane segments (helical) span residues 6-26 (YIII…YIVA), 80-100 (LVGI…VAGH), 122-142 (LAVN…VVAI), 144-164 (KYVS…MIMV), and 168-188 (AGLI…RANI).

The protein belongs to the PlsY family. In terms of assembly, probably interacts with PlsX.

Its subcellular location is the cell membrane. It carries out the reaction an acyl phosphate + sn-glycerol 3-phosphate = a 1-acyl-sn-glycero-3-phosphate + phosphate. Its pathway is lipid metabolism; phospholipid metabolism. Its function is as follows. Catalyzes the transfer of an acyl group from acyl-phosphate (acyl-PO(4)) to glycerol-3-phosphate (G3P) to form lysophosphatidic acid (LPA). This enzyme utilizes acyl-phosphate as fatty acyl donor, but not acyl-CoA or acyl-ACP. This is Glycerol-3-phosphate acyltransferase from Clostridioides difficile (strain 630) (Peptoclostridium difficile).